Here is a 187-residue protein sequence, read N- to C-terminus: Thioredoxin F, chloroplastic (187 aa).

The transit peptide at 1-72 (MALRLSVSSS…GSDTATVGAE (72 aa)) directs the protein to the chloroplast. A Thioredoxin domain is found at 73-186 (AEAVAVTGQV…LIQAIETVKS (114 aa)). Active-site nucleophile residues include C111 and C114. Residues C111 and C114 are joined by a disulfide bond.

Belongs to the thioredoxin family. Plant F-type subfamily.

It localises to the plastid. Its subcellular location is the chloroplast. In terms of biological role, thiol-disulfide oxidoreductase involved in the redox regulation of enzymes of both reductive pentose phosphate pathway (Calvin-Benson cycle) and oxidative pentose phosphate pathway. In Oryza sativa subsp. japonica (Rice), this protein is Thioredoxin F, chloroplastic.